We begin with the raw amino-acid sequence, 89 residues long: Protein RALF-like 5 (89 aa).

Positions methionine 1–alanine 25 are cleaved as a signal peptide. 2 disulfides stabilise this stretch: cysteine 39–cysteine 48 and cysteine 61–cysteine 67.

The protein belongs to the plant rapid alkalinization factor (RALF) family.

It is found in the secreted. Cell signaling peptide that may regulate plant stress, growth, and development. Mediates a rapid alkalinization of extracellular space by mediating a transient increase in the cytoplasmic Ca(2+) concentration leading to a calcium-dependent signaling events through a cell surface receptor and a concomitant activation of some intracellular mitogen-activated protein kinases. The chain is Protein RALF-like 5 (RALFL5) from Arabidopsis thaliana (Mouse-ear cress).